A 590-amino-acid chain; its full sequence is Sperm-associated microtubule inner protein 4 (590 aa).

Residue threonine 219 is modified to Phosphothreonine. Phosphoserine occurs at positions 407 and 422. Lysine 427 participates in a covalent cross-link: Glycyl lysine isopeptide (Lys-Gly) (interchain with G-Cter in SUMO2). At tyrosine 442 the chain carries Phosphotyrosine. The residue at position 485 (serine 485) is a Phosphoserine. Residue lysine 545 forms a Glycyl lysine isopeptide (Lys-Gly) (interchain with G-Cter in SUMO2) linkage. Serine 547 is modified (phosphoserine).

As to expression, predominantly expressed in the testes.

The protein localises to the cytoplasm. It localises to the cytoskeleton. Its subcellular location is the microtubule organizing center. The protein resides in the centrosome. It is found in the flagellum axoneme. In terms of biological role, microtubule inner protein (MIP) part of the dynein-decorated doublet microtubules (DMTs) in flagellum axoneme. May serve to reinforce and thus stabilize the microtubule structure in the sperm flagella. In Homo sapiens (Human), this protein is Sperm-associated microtubule inner protein 4.